A 277-amino-acid polypeptide reads, in one-letter code: Ras suppressor protein 1 (277 aa).

The interval 1–23 is disordered; that stretch reads MSKSLKKLVEESREKNQPEVDMS. Residue Ser2 is modified to N-acetylserine. Over residues 7-23 the composition is skewed to basic and acidic residues; sequence KLVEESREKNQPEVDMS. LRR repeat units follow at residues 41–63, 64–85, 87–108, 110–133, 135–156, 158–179, and 181–202; these read HITQ…AELK, NLEV…ISSL, KLKH…FGSS, LLEV…FFYL, TLRA…IGKL, KLQI…IGEL, and QLKE…LGNL. Residues 250–277 are disordered; it reads MQANPEPPKKNNDKSKKISRKPLAAKNK. Residues 256–265 show a composition bias toward basic and acidic residues; sequence PPKKNNDKSK.

Functionally, potentially plays a role in the Ras signal transduction pathway. Capable of suppressing v-Ras transformation in vitro. The polypeptide is Ras suppressor protein 1 (Rsu1) (Mus musculus (Mouse)).